The sequence spans 313 residues: tRNA dimethylallyltransferase (313 aa).

14–21 is an ATP binding site; sequence GPTASGKT. 16-21 is a binding site for substrate; the sequence is TASGKT. 2 interaction with substrate tRNA regions span residues 39–42 and 163–167; these read DSAL and QRIGR.

This sequence belongs to the IPP transferase family. As to quaternary structure, monomer. Requires Mg(2+) as cofactor.

It catalyses the reaction adenosine(37) in tRNA + dimethylallyl diphosphate = N(6)-dimethylallyladenosine(37) in tRNA + diphosphate. Functionally, catalyzes the transfer of a dimethylallyl group onto the adenine at position 37 in tRNAs that read codons beginning with uridine, leading to the formation of N6-(dimethylallyl)adenosine (i(6)A). The chain is tRNA dimethylallyltransferase from Thiobacillus denitrificans (strain ATCC 25259 / T1).